A 98-amino-acid chain; its full sequence is Gas vesicle protein A (98 aa).

Belongs to the gas vesicle GvpA family. In terms of assembly, the gas vesicle shell is 2 nm thick and consists of a single layer of this protein. It forms helical ribs nearly perpendicular to the long axis of the vesicle.

It localises to the gas vesicle shell. Functionally, gas vesicles are hollow, gas filled proteinaceous nanostructures found in some microorganisms. During planktonic growth they allow positioning of the organism at a favorable depth for light or nutrient acquisition. GvpA forms the protein shell. In Koribacter versatilis (strain Ellin345), this protein is Gas vesicle protein A.